The primary structure comprises 271 residues: Phosphonates import ATP-binding protein PhnC 2 (271 aa).

Positions Leu2–Ala245 constitute an ABC transporter domain. Gly34 to Ser41 contacts ATP.

It belongs to the ABC transporter superfamily. Phosphonates importer (TC 3.A.1.9.1) family. In terms of assembly, the complex is composed of two ATP-binding proteins (PhnC), two transmembrane proteins (PhnE) and a solute-binding protein (PhnD).

Its subcellular location is the cell inner membrane. The enzyme catalyses phosphonate(out) + ATP + H2O = phosphonate(in) + ADP + phosphate + H(+). Its function is as follows. Part of the ABC transporter complex PhnCDE involved in phosphonates import. Responsible for energy coupling to the transport system. The protein is Phosphonates import ATP-binding protein PhnC 2 of Roseobacter denitrificans (strain ATCC 33942 / OCh 114) (Erythrobacter sp. (strain OCh 114)).